Consider the following 904-residue polypeptide: MHQGAPSWGRRWFVVWALLGLTLGVLVASAAPTSPGTPGVAAATQAANGGPATPAPPPLGAAPTGDPKPKKNKKPKNPTPPRPAGDNATVAAGHATLREHLRDIKAENTDANFYVCPPPTGATVVQFEQPRRCPTRPEGQNYTEGIAVVFKENIAPYKFKATMYYKDVTVSQVWFGHRYSQFMGIFEDRAPVPFEEVIDKINAKGVCRSTAKYVRNNLETTAFHRDDHETDMELKPANAATRTSRGWHTTDLKYNPSRVEAFHRYGTTVNCIVEEVDARSVYPYDEFVLATGDFVYMSPFYGYREGSHTEHTTYAADRFKQVDGFYARDLTTKARATAPTTRNLLTTPKFTVAWDWVPKRPSVCTMTKWQEVDEMLRSEYGGSFRFSSDAISTTFTTNLTEYPLSRVDLGDCIGKDARDAMDRIFARRYNATHIKVGQPQYYQANGGFLIAYQPLLSNTLAELYVREHLREQSRKPPNPTPPPPGASANASVERIKTTSSIEFARLQFTYNHIQRHVNDMLGRVAIAWCELQNHELTLWNEARKLNPNAIASVTVGRRVSARMLGDVMAVSTCVPVAADNVIVQNSMRISSRPGACYSRPLVSFRYEDQGPLVEGQLGENNELRLTRDAIEPCTVGHRRYFTFGGGYVYFEEYAYSHQLSRADITTVSTFIDLNITMLEDHEFVPLEVYTRHEIKDSGLLDYTEVQRRNQLHDLRFADIDTVIHADANAAMFAGLGAFFEGMGDLGRAVGKVVMGIVGGVVSAVSGVSSFMSNPFGALAVGLLVLAGLAAAFFAFRYVMRLQSNPMKALYPLTTKELKNPTNPDASGEGEEGGDFDEAKLAEAREMIRYMALVSAMERTEHKAKKKGTSALLSAKVTDMVMRKRRNTNYTQVPNKDGDADEDDL.

Positions 1–30 (MHQGAPSWGRRWFVVWALLGLTLGVLVASA) are cleaved as a signal peptide. Residues 31–774 (APTSPGTPGV…SGVSSFMSNP (744 aa)) are Virion surface-facing. A compositionally biased stretch (low complexity) spans 32-52 (PTSPGTPGVAAATQAANGGPA). The interval 32–88 (PTSPGTPGVAAATQAANGGPATPAPPPLGAAPTGDPKPKKNKKPKNPTPPRPAGDNA) is disordered. N-linked (GlcNAc...) asparagine; by host glycosylation is found at asparagine 87 and asparagine 141. Cystine bridges form between cysteine 116–cysteine 573, cysteine 133–cysteine 529, cysteine 207–cysteine 271, cysteine 364–cysteine 412, and cysteine 596–cysteine 633. Involved in fusion and/or binding to host membrane regions lie at residues 173–179 (VWFGHRY) and 258–265 (RVEAFHRY). Asparagine 398 and asparagine 430 each carry an N-linked (GlcNAc...) asparagine; by host glycan. The segment at 470–492 (REQSRKPPNPTPPPPGASANASV) is disordered. Residues 476–485 (PPNPTPPPPG) show a composition bias toward pro residues. Asparagine 489 carries an N-linked (GlcNAc...) asparagine; by host glycan. A glycan (N-linked (GlcNAc...) asparagine; by host) is linked at asparagine 674. The tract at residues 719–772 (IDTVIHADANAAMFAGLGAFFEGMGDLGRAVGKVVMGIVGGVVSAVSGVSSFMS) is hydrophobic membrane proximal region. The chain crosses the membrane as a helical span at residues 775–795 (FGALAVGLLVLAGLAAAFFAF). Residues 796-904 (RYVMRLQSNP…KDGDADEDDL (109 aa)) lie on the Intravirion side of the membrane. A Golgi targeting motif is present at residues 849 to 852 (YMAL). The tract at residues 883 to 904 (KRRNTNYTQVPNKDGDADEDDL) is disordered. Position 887 is a phosphothreonine; by host (threonine 887). Positions 889-892 (YTQV) match the Internalization motif motif.

It belongs to the herpesviridae glycoprotein B family. In terms of assembly, homotrimer; disulfide-linked. Interacts with host receptor MYH9/NMMHC-IIA. Interacts with host receptor MYH10/NMMHC-IIB. Binds to heparan sulfate proteoglycans. Interacts with gH/gL heterodimer. Interacts with the host coreceptor PILRA. In terms of processing, the cytoplasmic tail is phosphorylated by the viral kinase US3. Phosphorylation may be linked to a down-regulation of gB expression on cell surface. Ubiquitinated.

The protein localises to the virion membrane. Its subcellular location is the host cell membrane. It localises to the host endosome membrane. It is found in the host Golgi apparatus membrane. Functionally, envelope glycoprotein that forms spikes at the surface of virion envelope and binds to the host cell entry receptors MYH9/NMMHC-IIA and MYH10/NMMHC-IIB, promoting the virus entry into host cells. Essential for the initial attachment to heparan sulfate moieties of the host cell surface proteoglycans. Involved in fusion of viral and cellular membranes leading to virus entry into the host cell: following initial binding to its host cell entry receptors, membrane fusion is mediated by the fusion machinery composed at least of gB and the heterodimer gH/gL. May be involved in the fusion between the virion envelope and the outer nuclear membrane during virion egress. Also plays a role, together with gK, in virus-induced cell-to-cell fusion (syncytia formation). This Human herpesvirus 1 (strain KOS) (HHV-1) protein is Envelope glycoprotein B.